Consider the following 187-residue polypeptide: Elongation factor P (187 aa).

Belongs to the elongation factor P family.

Its subcellular location is the cytoplasm. The protein operates within protein biosynthesis; polypeptide chain elongation. Involved in peptide bond synthesis. Stimulates efficient translation and peptide-bond synthesis on native or reconstituted 70S ribosomes in vitro. Probably functions indirectly by altering the affinity of the ribosome for aminoacyl-tRNA, thus increasing their reactivity as acceptors for peptidyl transferase. The chain is Elongation factor P from Gloeobacter violaceus (strain ATCC 29082 / PCC 7421).